The chain runs to 296 residues: Glycine--tRNA ligase alpha subunit (296 aa).

It belongs to the class-II aminoacyl-tRNA synthetase family. In terms of assembly, tetramer of two alpha and two beta subunits.

It is found in the cytoplasm. It carries out the reaction tRNA(Gly) + glycine + ATP = glycyl-tRNA(Gly) + AMP + diphosphate. In Listeria monocytogenes serotype 4b (strain CLIP80459), this protein is Glycine--tRNA ligase alpha subunit.